We begin with the raw amino-acid sequence, 311 residues long: Cbb3-type cytochrome c oxidase subunit CcoP1 (311 aa).

Transmembrane regions (helical) follow at residues 4 to 24 (FWSG…FWLI) and 56 to 76 (RWWF…LVLY). Cytochrome c domains are found at residues 130 to 209 (QAVK…RKDL) and 220 to 302 (ADLS…YSLS). Residues C143, C146, H147, M186, C233, C236, H237, and M279 each contribute to the heme c site.

The protein belongs to the CcoP / FixP family. In terms of assembly, component of the cbb3-type cytochrome c oxidase at least composed of CcoN, CcoO, CcoQ and CcoP. Heme c is required as a cofactor.

It is found in the cell inner membrane. Its pathway is energy metabolism; oxidative phosphorylation. In terms of biological role, C-type cytochrome. Part of the cbb3-type cytochrome c oxidase complex. CcoP subunit is required for transferring electrons from donor cytochrome c via its heme groups to CcoO subunit. From there, electrons are shuttled to the catalytic binuclear center of CcoN subunit where oxygen reduction takes place. The complex also functions as a proton pump. The polypeptide is Cbb3-type cytochrome c oxidase subunit CcoP1 (Stutzerimonas stutzeri (Pseudomonas stutzeri)).